A 497-amino-acid chain; its full sequence is MYYAVDYYADMGQISQDCFAATQTGASDFDMDELDDLDQVTQVIGYHPQFHDHFLATQNFIMKGDGPLPNDYRYYLAIIAAARHQCPYLVKRYEKEFINQGGDSAWLGGLDFIPAKLRAIYDINKILAHRPWLLRKEHIERLTKGKNSWSLSEVVHAMVLLSHFHSLSSFVFSCGLTQKLDGLSSPKLKSPPAAVAALAPTILITPTSPTEPQKGKPVLAEISLNNANPDYDSQTAASSNGGAPPDSANAVADGPDATTLNGYLATAQQLPQQHGISVETLMERMKVLSQKQDECSEAELSSRFQKVEQQTAELAAVTPEAAVGVPTNLSHYVDDANFIYQDFARRGTESINTFRIQDYSWEDHGYSLVDGLYNDVGIFLDAKFRAAYNLTYCTMGGIKNVDTSKFRRAIWNYIQCIYGIRHDDYDYGEVNQLLVRPLKMFIKTACCFPERITTKDYDSVLVELQDSEKVHVNLMIMEARNQAELLYALREIMRYMT.

Residues Ser185 and Ser190 each carry the phosphoserine modification. The segment covering 226–241 (NANPDYDSQTAASSNG) has biased composition (polar residues). The disordered stretch occupies residues 226–255 (NANPDYDSQTAASSNGGAPPDSANAVADGP).

Belongs to the sestrin family. Associates with the GATOR2 complex; the interaction is probably direct. Associates with the GATOR1 complex; the interaction is probably indirect and mediated by the GATOR2 complex. In terms of tissue distribution, highly expressed in muscle-enriched tissues (at protein level).

The protein resides in the nucleus. It localises to the cytoplasm. Its function is as follows. Functions as a negative feedback regulator of mTOR function. This Drosophila melanogaster (Fruit fly) protein is Sestrin homolog.